A 367-amino-acid polypeptide reads, in one-letter code: MIASLHRPTLAKVDLSAISENIEQVVSHIPKQVQTFAVVKANAYGHGAVEVAKHVSKQVDGFCVSNLDEALELRQAGIEQPILILGVVLPDGVPLAIQENISLTVASLEWLALAQKQGLDLIGLTCHIKVDSGMGRIGVRNLKDADNLIAGLKALGADVEGIFTHFATADEADDSKFKRQLSFFTDLVDNLTDRPRLVHASNSATSIWHAATVFNTVRLGVVIYGLNPSGSVLELPYNIQPALSLETALIHVKTLPAGQDVGYGATYTTTAEEVIGTLPIGYADGWTRDLQGFHVIVDGQLCPIVGRVSMDQITVRLPKVYPLGTPVTLMGENGGASITATEVAEKRGTINYEVLCLLSDRVPRSYD.

Lys40 functions as the Proton acceptor; specific for D-alanine in the catalytic mechanism. Lys40 bears the N6-(pyridoxal phosphate)lysine mark. Arg136 serves as a coordination point for substrate. The active-site Proton acceptor; specific for L-alanine is Tyr263. Substrate is bound at residue Met310.

This sequence belongs to the alanine racemase family. It depends on pyridoxal 5'-phosphate as a cofactor.

The catalysed reaction is L-alanine = D-alanine. It participates in amino-acid biosynthesis; D-alanine biosynthesis; D-alanine from L-alanine: step 1/1. Functionally, catalyzes the interconversion of L-alanine and D-alanine. May also act on other amino acids. This Streptococcus thermophilus (strain ATCC BAA-491 / LMD-9) protein is Alanine racemase (alr).